The sequence spans 272 residues: Energy-coupling factor transporter ATP-binding protein EcfA1 (272 aa).

Residues 2–237 form the ABC transporter domain; sequence IKVSDVCFSY…KNIIEKAKID (236 aa). 37–44 contributes to the ATP binding site; it reads GHNGSGKS.

The protein belongs to the ABC transporter superfamily. Energy-coupling factor EcfA family. As to quaternary structure, forms a stable energy-coupling factor (ECF) transporter complex composed of 2 membrane-embedded substrate-binding proteins (S component), 2 ATP-binding proteins (A component) and 2 transmembrane proteins (T component).

It is found in the cell membrane. In terms of biological role, ATP-binding (A) component of a common energy-coupling factor (ECF) ABC-transporter complex. Unlike classic ABC transporters this ECF transporter provides the energy necessary to transport a number of different substrates. This is Energy-coupling factor transporter ATP-binding protein EcfA1 from Mesomycoplasma hyopneumoniae (strain 7448) (Mycoplasma hyopneumoniae).